The primary structure comprises 145 residues: Large ribosomal subunit protein bL19 (145 aa).

The segment covering 114 to 136 (IAEKMESPAAKATREAAKKEAKA) has biased composition (basic and acidic residues). Residues 114–145 (IAEKMESPAAKATREAAKKEAKAAKKNAAPAE) are disordered.

Belongs to the bacterial ribosomal protein bL19 family.

Functionally, this protein is located at the 30S-50S ribosomal subunit interface and may play a role in the structure and function of the aminoacyl-tRNA binding site. In Methylocella silvestris (strain DSM 15510 / CIP 108128 / LMG 27833 / NCIMB 13906 / BL2), this protein is Large ribosomal subunit protein bL19.